The chain runs to 112 residues: Ig kappa chain V-II region MOPC 167 (112 aa).

Residues 1-23 form a framework-1 region; that stretch reads DIVITQDELSNPVTSGESVSISC. A disulfide bridge links C23 with C93. A complementarity-determining-1 region spans residues 24–39; that stretch reads RSSKSLLYKDGKTYLN. The interval 40 to 54 is framework-2; sequence WFLQRPGQSPQLLIS. The segment at 55–61 is complementarity-determining-2; that stretch reads LMSTRAS. The framework-3 stretch occupies residues 62-93; that stretch reads GVSDRFSGSGSRTDFTLEISRVKAEDVGVYYC. Positions 94-102 are complementarity-determining-3; sequence QQLVEYPLT. Residues 103-112 are framework-4; sequence FGAGTKLELK.

The polypeptide is Ig kappa chain V-II region MOPC 167 (Mus musculus (Mouse)).